A 264-amino-acid polypeptide reads, in one-letter code: Thymidylate synthase (264 aa).

Arg-21 is a dUMP binding site. Residue His-51 coordinates (6R)-5,10-methylene-5,6,7,8-tetrahydrofolate. 126-127 (RR) serves as a coordination point for dUMP. Residue Cys-146 is the Nucleophile of the active site. Residues 166-169 (RSCD), Asn-177, and 207-209 (HLY) each bind dUMP. Residue Asp-169 coordinates (6R)-5,10-methylene-5,6,7,8-tetrahydrofolate. A (6R)-5,10-methylene-5,6,7,8-tetrahydrofolate-binding site is contributed by Ala-263.

This sequence belongs to the thymidylate synthase family. Bacterial-type ThyA subfamily. As to quaternary structure, homodimer.

It localises to the cytoplasm. It catalyses the reaction dUMP + (6R)-5,10-methylene-5,6,7,8-tetrahydrofolate = 7,8-dihydrofolate + dTMP. The protein operates within pyrimidine metabolism; dTTP biosynthesis. Functionally, catalyzes the reductive methylation of 2'-deoxyuridine-5'-monophosphate (dUMP) to 2'-deoxythymidine-5'-monophosphate (dTMP) while utilizing 5,10-methylenetetrahydrofolate (mTHF) as the methyl donor and reductant in the reaction, yielding dihydrofolate (DHF) as a by-product. This enzymatic reaction provides an intracellular de novo source of dTMP, an essential precursor for DNA biosynthesis. This is Thymidylate synthase from Shewanella baltica (strain OS155 / ATCC BAA-1091).